The chain runs to 658 residues: Gametogenetin (658 aa).

Disordered regions lie at residues M1 to G268 and K285 to G584. The span at S14–P30 shows a compositional bias: basic and acidic residues. A compositionally biased stretch (low complexity) spans P54–S83. The interaction with GGNBP1 stretch occupies residues R127–P491. Positions P163 to P188 are enriched in pro residues. Residues L194 to S204 are compositionally biased toward polar residues. Over residues S252–G264 the composition is skewed to low complexity. Residue S384 is modified to Phosphoserine. Over residues P398–P409 the composition is skewed to low complexity. A compositionally biased stretch (pro residues) spans R423–P460. The segment covering L489–A516 has biased composition (low complexity). An interactions with ZNF403/GGNBP2 and OAZ3 region spans residues E496–T658. Residues I527 to R536 show a composition bias toward basic residues.

Interacts with FANCL, GGNBP1 and ZNF403/GGNBP2.

In terms of biological role, may be involved in spermatogenesis. The protein is Gametogenetin (Ggn) of Rattus norvegicus (Rat).